Consider the following 162-residue polypeptide: NADPH-dependent 7-cyano-7-deazaguanine reductase (162 aa).

The active-site Thioimide intermediate is the Cys53. Asp60 acts as the Proton donor in catalysis. Substrate is bound by residues 75–77 and 94–95; these read VES and HE.

The protein belongs to the GTP cyclohydrolase I family. QueF type 1 subfamily.

Its subcellular location is the cytoplasm. The catalysed reaction is 7-aminomethyl-7-carbaguanine + 2 NADP(+) = 7-cyano-7-deazaguanine + 2 NADPH + 3 H(+). The protein operates within tRNA modification; tRNA-queuosine biosynthesis. Catalyzes the NADPH-dependent reduction of 7-cyano-7-deazaguanine (preQ0) to 7-aminomethyl-7-deazaguanine (preQ1). The protein is NADPH-dependent 7-cyano-7-deazaguanine reductase of Streptococcus mutans serotype c (strain ATCC 700610 / UA159).